The primary structure comprises 274 residues: 4-diphosphocytidyl-2-C-methyl-D-erythritol kinase (274 aa).

The active site involves Lys8. 94–104 (PSGAGLGGGSA) serves as a coordination point for ATP. Asp136 is a catalytic residue.

Belongs to the GHMP kinase family. IspE subfamily.

It catalyses the reaction 4-CDP-2-C-methyl-D-erythritol + ATP = 4-CDP-2-C-methyl-D-erythritol 2-phosphate + ADP + H(+). It functions in the pathway isoprenoid biosynthesis; isopentenyl diphosphate biosynthesis via DXP pathway; isopentenyl diphosphate from 1-deoxy-D-xylulose 5-phosphate: step 3/6. Its function is as follows. Catalyzes the phosphorylation of the position 2 hydroxy group of 4-diphosphocytidyl-2C-methyl-D-erythritol. The polypeptide is 4-diphosphocytidyl-2-C-methyl-D-erythritol kinase (Bacteroides fragilis (strain ATCC 25285 / DSM 2151 / CCUG 4856 / JCM 11019 / LMG 10263 / NCTC 9343 / Onslow / VPI 2553 / EN-2)).